A 308-amino-acid chain; its full sequence is Glutaminase 1 (308 aa).

Substrate contacts are provided by serine 64, asparagine 116, glutamate 161, asparagine 168, tyrosine 192, tyrosine 244, and valine 262.

It belongs to the glutaminase family. Homotetramer.

The enzyme catalyses L-glutamine + H2O = L-glutamate + NH4(+). This chain is Glutaminase 1, found in Halalkalibacterium halodurans (strain ATCC BAA-125 / DSM 18197 / FERM 7344 / JCM 9153 / C-125) (Bacillus halodurans).